The sequence spans 580 residues: Cyclin-K (580 aa).

Positions K262 to R580 are disordered. Composition is skewed to low complexity over residues Q263–P277 and V285–K321. A phosphoserine mark is found at S324, S328, S329, and S340. Positions P377–E386 are enriched in low complexity. Residues Q400 to S426 show a composition bias toward pro residues. Residues S427–Y444 are compositionally biased toward low complexity. Pro residues predominate over residues V477–P568.

Belongs to the cyclin family. Cyclin C subfamily. Regulatory subunit of cyclin-dependent kinases. Identified in a complex with a kinase and the RNA polymerase II holoenzyme. Interacts with POLR2A. Interacts with CDK12 and CDK13. Interacts with CDK9 according to PubMed:10574912; does not interact with CDK9 according to PubMed:22012619. In terms of assembly, (Microbial infection) Interacts with human herpes virus 1 (HHV-1) transcriptional regulator ICP22. Widely expressed. Highest levels in testis.

It localises to the nucleus. Its function is as follows. Regulatory subunit of cyclin-dependent kinases that mediates activation of target kinases. Plays a role in transcriptional regulation via its role in regulating the phosphorylation of the C-terminal domain (CTD) of the large subunit of RNA polymerase II (POLR2A). The chain is Cyclin-K (CCNK) from Homo sapiens (Human).